Reading from the N-terminus, the 460-residue chain is 3-ketoacyl-CoA synthase 7 (460 aa).

A helical transmembrane segment spans residues 21–41 (FHQFLVASACVLIAVFGYYFF). The FAE domain occupies 38–328 (YYFFKPRCII…YIISFIQRKW (291 aa)). Active-site residues include C183, H262, H345, H349, and N382.

It belongs to the thiolase-like superfamily. Chalcone/stilbene synthases family. Expressed in flowers.

The protein localises to the membrane. It catalyses the reaction a very-long-chain acyl-CoA + malonyl-CoA + H(+) = a very-long-chain 3-oxoacyl-CoA + CO2 + CoA. It functions in the pathway lipid metabolism; fatty acid biosynthesis. The chain is 3-ketoacyl-CoA synthase 7 from Arabidopsis thaliana (Mouse-ear cress).